The sequence spans 4513 residues: Dynein-1-beta heavy chain, flagellar inner arm I1 complex (4513 aa).

Positions 1–1806 (MEPGDEGKGH…IVKQVLSVFY (1806 aa)) are stem. 3 coiled-coil regions span residues 192–223 (KAAAKQKDLVQRLESTIIHWTRQVKELLNQQD), 1544–1577 (TAQGLLESFQDMNNKLERIQKSLDNYLENKRQQF), and 1704–1727 (THECEKALADADSARKNLKLLKKK). 4 AAA regions span residues 1807–2028 (YGYE…PIAR), 2089–2350 (RAIE…VPEN), 2458–2706 (FKPA…IIQG), and 2808–3059 (DYAL…LKRR). ATP is bound by residues 1845–1852 (GPAGTGKT), 2127–2134 (GRTGSGKS), 2497–2504 (GNVGVGKT), and 2848–2855 (GVGGSGRK). 3 coiled-coil regions span residues 3107–3193 (AAMK…LTKK), 3301–3384 (KRAK…SISE), and 3499–3519 (RLKVLNLQMSDMARQIENAIQ). The stalk stretch occupies residues 3107–3384 (AAMKKVAEEK…RVRWEASISE (278 aa)). AAA regions lie at residues 3443-3674 (LANP…EVNA) and 3890-4109 (ATTY…LLKS).

The I1 inner arm complex (also known as the f dynein complex) is a two-headed isoform composed of two heavy chains (1-alpha and 1-beta), three intermediate chains and three light chains. I1 occupies a specific position proximal to the first radial spoke and repeats every 96 nm along the length of the axoneme.

The protein resides in the cell projection. The protein localises to the cilium. It localises to the flagellum. It is found in the cytoplasm. Its subcellular location is the cytoskeleton. The protein resides in the flagellum axoneme. In terms of biological role, force generating protein of eukaryotic cilia and flagella. Produces force towards the minus ends of microtubules. Dynein has ATPase activity; the force-producing power stroke is thought to occur on release of ADP. Required for assembly of the I1 inner arm complex and its targeting to the appropriate axoneme location. Also required for phototaxis. This Chlamydomonas reinhardtii (Chlamydomonas smithii) protein is Dynein-1-beta heavy chain, flagellar inner arm I1 complex (DHC10).